The following is a 141-amino-acid chain: Cystatin (141 aa).

An N-terminal signal peptide occupies residues 1 to 26 (MVHSQLPVAASLRLLCALLLLPSATM). The 101-residue stretch at 29–129 (GGLSPRSVTD…CRFQVWSRPW (101 aa)) folds into the Cystatin domain. Positions 73-77 (QVVAG) match the Secondary area of contact motif. 2 disulfide bridges follow: cysteine 91-cysteine 107 and cysteine 120-cysteine 140.

This sequence belongs to the cystatin family. As to expression, expressed by the venom gland at an extremely low level (at protein level).

It localises to the secreted. Its function is as follows. Inhibits various C1 cysteine proteases including cathepsin L, papain and cathepsin B. This protein has no toxic activity and its function in the venom is unknown. It may play a role as a housekeeping or regulatory protein. The polypeptide is Cystatin (Cryptophis nigrescens (Eastern small-eyed snake)).